The following is an 876-amino-acid chain: Valine--tRNA ligase (876 aa).

The 'HIGH' region motif lies at 44–54 (PNVTGKLHLGH). The short motif at 520-524 (KMSKS) is the 'KMSKS' region element. K523 contributes to the ATP binding site. A coiled-coil region spans residues 805–876 (LEGLIDMDKE…VKARIEQLKA (72 aa)).

It belongs to the class-I aminoacyl-tRNA synthetase family. ValS type 1 subfamily. Monomer.

It localises to the cytoplasm. The catalysed reaction is tRNA(Val) + L-valine + ATP = L-valyl-tRNA(Val) + AMP + diphosphate. Its function is as follows. Catalyzes the attachment of valine to tRNA(Val). As ValRS can inadvertently accommodate and process structurally similar amino acids such as threonine, to avoid such errors, it has a 'posttransfer' editing activity that hydrolyzes mischarged Thr-tRNA(Val) in a tRNA-dependent manner. This chain is Valine--tRNA ligase, found in Staphylococcus aureus (strain Mu3 / ATCC 700698).